The following is a 114-amino-acid chain: Snake venom vascular endothelial growth factor (114 aa).

Position 1 is a pyrrolidone carboxylic acid (Gln-1). Disulfide bonds link Cys-14/Cys-56, Cys-45/Cys-91, and Cys-49/Cys-93. The disordered stretch occupies residues 92 to 114 (ECRPGSTVNNGKRKKNPKEGEPR).

It belongs to the PDGF/VEGF growth factor family. Snake venom VEGF subfamily. In terms of assembly, homodimer; disulfide-linked. Interacts with human VEGF receptor 1/FLT1. Interacts with human VEGF receptor 2/KDR. As to expression, expressed by venom gland.

The protein localises to the secreted. Its function is as follows. Snake venom vascular endothelial growth factor (svVEGF) that may contribute to venom dispersion and prey subjugation by inducing vascular permeability and hypotension. Induces an increase in capillary permeability after intradermal injection, as well as a drastic hypotensive effect after intravenous injection. The hypotension is mediated by nitric oxide (NO), which is produced by VEGF-activated endothelium NO synthase. Induces angiogenesis and migration of human vascular endothelial cells in vitro. Exhibits angiogenic activity by inducing human umbilical vein endothelial cells (HUVEC) to develop vessels in vitro. Induces cellular migration of HUVEC cells towards a wound in scratch assays, enhancing wound closure after 12 h by 49.5%. Induces dose-dependent leukocyte recruitment to the peritoneal cavity leading to increased vascular permeability in mice. This is Snake venom vascular endothelial growth factor from Crotalus durissus terrificus (South American rattlesnake).